The following is a 298-amino-acid chain: Arginase (298 aa).

Residues His-98, Asp-121, His-123, and Asp-125 each coordinate Mn(2+). Residues 123-127 (HGDLN), 134-136 (SGN), and Asp-177 contribute to the substrate site. Mn(2+) contacts are provided by Asp-225 and Asp-227. Substrate is bound by residues Thr-239 and Glu-270.

It belongs to the arginase family. Mn(2+) serves as cofactor.

It catalyses the reaction L-arginine + H2O = urea + L-ornithine. Its pathway is nitrogen metabolism; urea cycle; L-ornithine and urea from L-arginine: step 1/1. In Brevibacillus brevis (Bacillus brevis), this protein is Arginase (rocF).